A 309-amino-acid polypeptide reads, in one-letter code: Foldase protein PrsA (309 aa).

The signal sequence occupies residues 1-22 (MKTRSKLAAGFLTLMSVATLAA). Residue Cys-23 is the site of N-palmitoyl cysteine attachment. Cys-23 carries S-diacylglycerol cysteine lipidation. Residues 146-241 (TPETSVQVIK…TSYYIIKVTD (96 aa)) form the PpiC domain.

It belongs to the PrsA family.

It is found in the cell membrane. The enzyme catalyses [protein]-peptidylproline (omega=180) = [protein]-peptidylproline (omega=0). In terms of biological role, plays a major role in protein secretion by helping the post-translocational extracellular folding of several secreted proteins. The chain is Foldase protein PrsA from Streptococcus agalactiae serotype Ia (strain ATCC 27591 / A909 / CDC SS700).